The chain runs to 426 residues: Colanic acid biosynthesis protein WcaK (426 aa).

The protein belongs to the polysaccharide pyruvyl transferase family.

Its pathway is slime biogenesis; slime polysaccharide biosynthesis. In Escherichia coli (strain K12), this protein is Colanic acid biosynthesis protein WcaK (wcaK).